A 154-amino-acid chain; its full sequence is MHPQRKQRLMIVLFIVVFSSLAVGLIAYALRENINLFYPPSKIAAGDVPHNTRIRAGGCVKPGSVVRSQENLDVRFVITDGNADVVVSYTGILPDLFAEGEAAVINGIVTEAGDIQASEVLAKHDETYMPPEVAEAMKGKGQHQATCGGLNYGA.

Residues 1–8 (MHPQRKQR) lie on the Cytoplasmic side of the membrane. The chain crosses the membrane as a helical; Signal-anchor for type II membrane protein span at residues 9-29 (LMIVLFIVVFSSLAVGLIAYA). Residues 30–154 (LRENINLFYP…ATCGGLNYGA (125 aa)) are Periplasmic-facing. 2 residues coordinate heme: His124 and Tyr128.

Belongs to the CcmE/CycJ family.

Its subcellular location is the cell inner membrane. Heme chaperone required for the biogenesis of c-type cytochromes. Transiently binds heme delivered by CcmC and transfers the heme to apo-cytochromes in a process facilitated by CcmF and CcmH. The protein is Cytochrome c-type biogenesis protein CcmE of Cellvibrio japonicus (strain Ueda107) (Pseudomonas fluorescens subsp. cellulosa).